Reading from the N-terminus, the 338-residue chain is MKRMIALDGAQGEGGGQILRSALSLSMITGQPFTITGIRAGRAKPGLLRQHLTAVKAAAEICRATVEGAELGSQRLLFRPGTVRGGDYRFAIGSAGSCTLVLQTVLPALWFADGPSRVEVSGGTDNPSAPPADFIRRVLEPLLAKMGIHQQTTLLRHGFYPAGGGVVATEVSPVASFNTLQLGERGNIVQMRGEVLLAGVPRHVAEREIATLAGSFSLHEQNIHNLPRDQGPGNTVSLEVESENITERFFVVGEKRVSAEVVAAQLVKEVKRYLASTAAVGEYLADQLVLPMALAGAGEFTVAHPSCHLLTNIAVVERFLPVRFSLIETDGVTRVSIE.

ATP-binding positions include Q103 and 283–287; that span reads YLADQ. The Tele-AMP-histidine intermediate role is filled by H308.

This sequence belongs to the RNA 3'-terminal cyclase family. Type 1 subfamily.

It is found in the cytoplasm. The enzyme catalyses a 3'-end 3'-phospho-ribonucleotide-RNA + ATP = a 3'-end 2',3'-cyclophospho-ribonucleotide-RNA + AMP + diphosphate. Functionally, catalyzes the conversion of 3'-phosphate to a 2',3'-cyclic phosphodiester at the end of RNA. The mechanism of action of the enzyme occurs in 3 steps: (A) adenylation of the enzyme by ATP; (B) transfer of adenylate to an RNA-N3'P to produce RNA-N3'PP5'A; (C) and attack of the adjacent 2'-hydroxyl on the 3'-phosphorus in the diester linkage to produce the cyclic end product. The biological role of this enzyme is unknown but it is likely to function in some aspects of cellular RNA processing. This is RNA 3'-terminal phosphate cyclase from Escherichia coli O9:H4 (strain HS).